Reading from the N-terminus, the 530-residue chain is MSGKWISALLLLQISFCFKSGNCGKVLVWPMEYSHWMNIKIILEELVQKGHEVTVLRPSAFVFLDPKETSDLKFVTFPTSFSSHDLENFFTRFVNVWTYELPRDTCLSYFLYLQDTIDEYSDYCLTVCKEAVSNKQFMTKLQESKFDVVFSDAIGPCGELIAELLQIPFLYSLRFSPGYTIEQYIGGVLFPPSYVPMIFSGLAGQMTFIERVHNMICMLYFDFWFQTFREKKWDPFYSKTLGRPTTLAEIMGKAEMWLIRSYWDLEFPHPISPNVDYIGGLHCKPAKPLPKDIEDFVQSSGEHGVVVFSLGSMVRNMTEEKANIIAWALAQIPQKVLWRFDGKKPPTLGPNTRLYKWLPQNDLLGHPKTKAFVTHGGANGIYEAIHHGIPMIGIPLFAEQHDNIAHMVAKGAAVEVNFRTMSKSDLLNALEEVIDNPFYKKNAMWLSTIHHDQPTKPLDRAVFWIEFVMRHKGAKHLRSLGHNLPWYQYHSLDVIGFLLSCVAVTVVLALKCFLFVYRFFVKKEKKTKNE.

The signal sequence occupies residues 1–23 (MSGKWISALLLLQISFCFKSGNC). N-linked (GlcNAc...) asparagine glycosylation is present at Asn316. Residues 494 to 510 (VIGFLLSCVAVTVVLAL) form a helical membrane-spanning segment.

Belongs to the UDP-glycosyltransferase family. Post-translationally, N-glycosylated. As to expression, liver. Lower levels seen in the kidney and testis.

It is found in the endoplasmic reticulum membrane. The enzyme catalyses glucuronate acceptor + UDP-alpha-D-glucuronate = acceptor beta-D-glucuronoside + UDP + H(+). It catalyses the reaction 17alpha-estradiol + UDP-alpha-D-glucuronate = 17alpha-estradiol 3-O-(beta-D-glucuronate) + UDP + H(+). The catalysed reaction is 16alpha,17alpha-estriol + UDP-alpha-D-glucuronate = 16alpha,17alpha-estriol 3-O-(beta-D-glucuronate) + UDP + H(+). It carries out the reaction 17beta-hydroxy-5alpha-androstan-3-one + UDP-alpha-D-glucuronate = 5alpha-dihydrotestosterone 17-O-(beta-D-glucuronate) + UDP + H(+). Its function is as follows. UDP-glucuronosyltransferase (UGT) that catalyzes phase II biotransformation reactions in which lipophilic substrates are conjugated with glucuronic acid to increase the metabolite's water solubility, thereby facilitating excretion into either the urine or bile. Essential for the elimination and detoxification of drugs, xenobiotics and endogenous compounds. Catalyzes the glucuronidation of endogenous steroid hormones such as androgens (testosterone, androsterone) and estrogens (estradiol, epiestradiol, estriol, catechol estrogens). Displays glucuronidation activity toward several classes of xenoblotic substrates, including phenolic compounds (eugenol, 4-nitrophenol, 4-hydroxybiphenyl) and phenylpropanoids (naringenin, coumarins). Catalyzes the glucuronidation of monoterpenoid alcohols such as borneol, menthol and isomenthol, a class of natural compounds used in essential oils. In Rattus norvegicus (Rat), this protein is UDP-glucuronosyltransferase 2B15.